A 204-amino-acid polypeptide reads, in one-letter code: MLPAALHPDSLWRPLEQLVLPPIIRDWMADPDSLTRRLKRYGHFSVVPGLHAIALPRADERRLLSLPVRRAALIREVTLHLDDTPVVAARSVLPLTSLAGANRSLGHMGSRSLGLELYNRPICQRDQVWARLASTDQHHSLCWGRQSRFIKRGAPLLVAEYFLPALWEKLHVARCVQASWLHDKAYLYASIRGEPTDAVRLSRF.

Residues Arg75, Leu113, and Glu160 each coordinate substrate.

Belongs to the UbiC family.

It is found in the cytoplasm. It catalyses the reaction chorismate = 4-hydroxybenzoate + pyruvate. The protein operates within cofactor biosynthesis; ubiquinone biosynthesis. Its function is as follows. Removes the pyruvyl group from chorismate, with concomitant aromatization of the ring, to provide 4-hydroxybenzoate (4HB) for the ubiquinone pathway. The chain is Probable chorismate pyruvate-lyase from Alcanivorax borkumensis (strain ATCC 700651 / DSM 11573 / NCIMB 13689 / SK2).